The primary structure comprises 186 residues: ATP synthase subunit delta (186 aa).

The protein belongs to the ATPase delta chain family. In terms of assembly, F-type ATPases have 2 components, F(1) - the catalytic core - and F(0) - the membrane proton channel. F(1) has five subunits: alpha(3), beta(3), gamma(1), delta(1), epsilon(1). F(0) has three main subunits: a(1), b(2) and c(10-14). The alpha and beta chains form an alternating ring which encloses part of the gamma chain. F(1) is attached to F(0) by a central stalk formed by the gamma and epsilon chains, while a peripheral stalk is formed by the delta and b chains.

The protein localises to the cell inner membrane. In terms of biological role, f(1)F(0) ATP synthase produces ATP from ADP in the presence of a proton or sodium gradient. F-type ATPases consist of two structural domains, F(1) containing the extramembraneous catalytic core and F(0) containing the membrane proton channel, linked together by a central stalk and a peripheral stalk. During catalysis, ATP synthesis in the catalytic domain of F(1) is coupled via a rotary mechanism of the central stalk subunits to proton translocation. This protein is part of the stalk that links CF(0) to CF(1). It either transmits conformational changes from CF(0) to CF(1) or is implicated in proton conduction. This chain is ATP synthase subunit delta, found in Bacteroides thetaiotaomicron (strain ATCC 29148 / DSM 2079 / JCM 5827 / CCUG 10774 / NCTC 10582 / VPI-5482 / E50).